The primary structure comprises 357 residues: DNA replication and repair protein RecF (357 aa).

31–38 (GQNGAGKT) is an ATP binding site.

Belongs to the RecF family.

The protein localises to the cytoplasm. Its function is as follows. The RecF protein is involved in DNA metabolism; it is required for DNA replication and normal SOS inducibility. RecF binds preferentially to single-stranded, linear DNA. It also seems to bind ATP. The sequence is that of DNA replication and repair protein RecF from Coxiella burnetii (strain RSA 493 / Nine Mile phase I).